We begin with the raw amino-acid sequence, 259 residues long: Protein-L-isoaspartate O-methyltransferase 1 (259 aa).

Serine 109 is an active-site residue.

Belongs to the methyltransferase superfamily. L-isoaspartyl/D-aspartyl protein methyltransferase family.

The protein resides in the cytoplasm. It catalyses the reaction [protein]-L-isoaspartate + S-adenosyl-L-methionine = [protein]-L-isoaspartate alpha-methyl ester + S-adenosyl-L-homocysteine. Its function is as follows. Catalyzes the methyl esterification of L-isoaspartyl residues in peptides and proteins that result from spontaneous decomposition of normal L-aspartyl and L-asparaginyl residues. It plays a role in the repair and/or degradation of damaged proteins. The sequence is that of Protein-L-isoaspartate O-methyltransferase 1 from Cupriavidus necator (strain ATCC 17699 / DSM 428 / KCTC 22496 / NCIMB 10442 / H16 / Stanier 337) (Ralstonia eutropha).